Here is a 171-residue protein sequence, read N- to C-terminus: Plastocyanin minor isoform, chloroplastic (171 aa).

The 99-residue stretch at 73-171 (MEVLLGSDDG…AGMVGKLTVK (99 aa)) folds into the Plastocyanin-like domain. The Cu cation site is built by His-109, Cys-156, His-159, and Met-164.

Belongs to the plastocyanin family. Cu(2+) is required as a cofactor.

Its subcellular location is the plastid. It localises to the chloroplast thylakoid membrane. Functionally, participates in electron transfer between P700 and the cytochrome b6-f complex in photosystem I. Seems to be a minor plastocyanin in Arabidopsis. The chain is Plastocyanin minor isoform, chloroplastic (PETE) from Arabidopsis thaliana (Mouse-ear cress).